Consider the following 287-residue polypeptide: Uroplakin-3a (287 aa).

The signal sequence occupies residues 1-18; the sequence is MLLLWALLALGCLRCGWT. The Lumenal portion of the chain corresponds to 19–207; it reads VNLQPQLASV…DTWPGRRSGG (189 aa). N-linked (GlcNAc...) asparagine glycosylation is found at Asn74, Asn139, and Asn170. The chain crosses the membrane as a helical span at residues 208–235; sequence MIVITSILGSLPFFLLVGFAGAIILSFV. Over 236 to 287 the chain is Cytoplasmic; sequence DMGSSDGEMTHDSQITQEAVPKTLGTSEPSYSSVNRGPPLDRAEVFSSKLQD. Residues 243–287 form a disordered region; sequence EMTHDSQITQEAVPKTLGTSEPSYSSVNRGPPLDRAEVFSSKLQD. Positions 259-270 are enriched in polar residues; sequence LGTSEPSYSSVN.

It belongs to the uroplakin-3 family. In terms of assembly, heterodimer with uroplakin-1B (UPK1B).

It localises to the endoplasmic reticulum membrane. Its function is as follows. Component of the asymmetric unit membrane (AUM); a highly specialized biomembrane elaborated by terminally differentiated urothelial cells. May play an important role in AUM-cytoskeleton interaction in terminally differentiated urothelial cells. It also contributes to the formation of urothelial glycocalyx which may play an important role in preventing bacterial adherence. This is Uroplakin-3a (Upk3a) from Mus musculus (Mouse).